The following is a 258-amino-acid chain: Hydroxyethylthiazole kinase (258 aa).

M37 lines the substrate pocket. ATP-binding residues include R112 and T158. Substrate is bound at residue A185.

The protein belongs to the Thz kinase family. Mg(2+) is required as a cofactor.

The catalysed reaction is 5-(2-hydroxyethyl)-4-methylthiazole + ATP = 4-methyl-5-(2-phosphooxyethyl)-thiazole + ADP + H(+). It participates in cofactor biosynthesis; thiamine diphosphate biosynthesis; 4-methyl-5-(2-phosphoethyl)-thiazole from 5-(2-hydroxyethyl)-4-methylthiazole: step 1/1. In terms of biological role, catalyzes the phosphorylation of the hydroxyl group of 4-methyl-5-beta-hydroxyethylthiazole (THZ). The protein is Hydroxyethylthiazole kinase of Rhizobium etli (strain ATCC 51251 / DSM 11541 / JCM 21823 / NBRC 15573 / CFN 42).